Consider the following 579-residue polypeptide: uncharacterized protein (579 aa).

Belongs to the UbiD family.

This is an uncharacterized protein from Chlamydia muridarum (strain MoPn / Nigg).